We begin with the raw amino-acid sequence, 268 residues long: Zinc finger protein SNAI2 (268 aa).

Residues 1–20 form an SNAG domain region; that stretch reads MPRSFLVKKHFNASKKPNYS. The disordered stretch occupies residues 80–117; that stretch reads SSSLGRVSPPPPSDTSSKDHSGSESPISDEEERLQSKL. C2H2-type zinc fingers lie at residues 128 to 150, 159 to 181, 185 to 207, and 213 to 235; these read FQCNLCNKTYSTFSGLAKHKQLH, FSCKYCDKEYVSLGALKMHIRTH, CVCKICGKAFSRPWLLQGHIRTH, and FSCPHCNRAFADRSNLRAHLQTH. A C2H2-type 5; atypical zinc finger spans residues 241 to 264; that stretch reads YQCKNCSKTFSRMSLLHKHEESGC.

This sequence belongs to the snail C2H2-type zinc-finger protein family. Interacts (via SNAG domain) with LIMD1 (via LIM domains), WTIP (via LIM domains) and AJUBA (via LIM domains). Interacts (via zinc fingers) with KPNA2, KPNB1, and TNPO1. May interact (via zinc fingers) with IPO7. In terms of processing, phosphorylated by GSK3B. Once phosphorylated, it becomes a target for ubiquitination. Ubiquitinated by the SCF(FBXO11) complex; ubiquitination requires previous GSK3B-mediated SNAI2 phosphorylation. Expressed in most adult human tissues, including spleen, thymus, prostate, testis, ovary, small intestine, colon, heart, brain, placenta, lung, liver, skeletal muscle, kidney and pancreas. Not detected in peripheral blood leukocyte. Expressed in the dermis and in all layers of the epidermis, with high levels of expression in the basal layers (at protein level). Expressed in osteoblasts (at protein level). Expressed in mesenchymal stem cells (at protein level). Expressed in breast tumor cells (at protein level).

Its subcellular location is the nucleus. The protein localises to the cytoplasm. Functionally, transcriptional repressor that modulates both activator-dependent and basal transcription. Involved in the generation and migration of neural crest cells. Plays a role in mediating RAF1-induced transcriptional repression of the TJ protein, occludin (OCLN) and subsequent oncogenic transformation of epithelial cells. Represses BRCA2 expression by binding to its E2-box-containing silencer and recruiting CTBP1 and HDAC1 in breast cells. In epidermal keratinocytes, binds to the E-box in ITGA3 promoter and represses its transcription. Involved in the regulation of ITGB1 and ITGB4 expression and cell adhesion and proliferation in epidermal keratinocytes. Binds to E-box2 domain of BSG and activates its expression during TGFB1-induced epithelial-mesenchymal transition (EMT) in hepatocytes. Represses E-Cadherin/CDH1 transcription via E-box elements. Involved in osteoblast maturation. Binds to RUNX2 and SOC9 promoters and may act as a positive and negative transcription regulator, respectively, in osteoblasts. Binds to CXCL12 promoter via E-box regions in mesenchymal stem cells and osteoblasts. Plays an essential role in TWIST1-induced EMT and its ability to promote invasion and metastasis. The sequence is that of Zinc finger protein SNAI2 (SNAI2) from Homo sapiens (Human).